Consider the following 98-residue polypeptide: NADH-ubiquinone oxidoreductase chain 4L (98 aa).

Helical transmembrane passes span 1-21, 29-49, and 61-81; these read MSIVYINIFLAFIMSLLGMLI, SLLCLEGMMLSLFVMITLIIL, and IILLVFAACEAALGLSLLVMV.

Belongs to the complex I subunit 4L family. As to quaternary structure, core subunit of respiratory chain NADH dehydrogenase (Complex I) which is composed of 45 different subunits.

It localises to the mitochondrion inner membrane. It catalyses the reaction a ubiquinone + NADH + 5 H(+)(in) = a ubiquinol + NAD(+) + 4 H(+)(out). Its function is as follows. Core subunit of the mitochondrial membrane respiratory chain NADH dehydrogenase (Complex I) which catalyzes electron transfer from NADH through the respiratory chain, using ubiquinone as an electron acceptor. Part of the enzyme membrane arm which is embedded in the lipid bilayer and involved in proton translocation. The protein is NADH-ubiquinone oxidoreductase chain 4L (MT-ND4L) of Herpestes javanicus (Small Indian mongoose).